A 334-amino-acid chain; its full sequence is MKKNQFLKESDVTAESVFFMKRRQVLKALGISAAALSLPHAAHADLLSWFKGNDRPPAPAGKALEFSKPAAWQNNLPLTPADKVSGYNNFYEFGLDKADPAANAGSLKTDPWTLKISGEVAKPLTLDHDDLTRRFPLEERIYRMRCVEAWSMVVPWIGFPLHKLLALAEPTSNAKYVAFETIYAPEQMPGQQDRFIGGGLKYPYVEGLRLDEAMHPLTLMTVGVYGKALPPQNGAPVRLIVPWKYGFKGIKSIVSIKLTRERPPTTWNLAAPDEYGFYANVNPHVDHPRWSQATERFIGSGGILDVQRQPTLLFNGYADQVASLYRGLDLRENF.

Residues 1–44 constitute a signal peptide (tat-type signal); that stretch reads MKKNQFLKESDVTAESVFFMKRRQVLKALGISAAALSLPHAAHA. Mo-molybdopterin is bound by residues Asn-88, 91-92, Cys-146, Thr-181, Asn-233, Arg-238, and 249-251; these read YE and GIK.

The protein belongs to the MsrP family. As to quaternary structure, heterodimer of a catalytic subunit (MsrP) and a heme-binding subunit (MsrQ). Mo-molybdopterin is required as a cofactor. Predicted to be exported by the Tat system. The position of the signal peptide cleavage has not been experimentally proven.

The protein localises to the periplasm. It catalyses the reaction L-methionyl-[protein] + a quinone + H2O = L-methionyl-(S)-S-oxide-[protein] + a quinol. The enzyme catalyses L-methionyl-[protein] + a quinone + H2O = L-methionyl-(R)-S-oxide-[protein] + a quinol. Part of the MsrPQ system that repairs oxidized periplasmic proteins containing methionine sulfoxide residues (Met-O), using respiratory chain electrons. Thus protects these proteins from oxidative-stress damage caused by reactive species of oxygen and chlorine generated by the host defense mechanisms. MsrPQ is essential for the maintenance of envelope integrity under bleach stress, rescuing a wide series of structurally unrelated periplasmic proteins from methionine oxidation, including the primary periplasmic chaperone SurA and the lipoprotein Pal. The catalytic subunit MsrP is non-stereospecific, being able to reduce both (R-) and (S-) diastereoisomers of methionine sulfoxide. This is Protein-methionine-sulfoxide reductase catalytic subunit MsrP from Escherichia coli O157:H7.